We begin with the raw amino-acid sequence, 393 residues long: MATQIAPHGGRLVDRWLRGPAREEALERARRLPRVRLDAREAADLEMIGDGALSPLTGFMGQADYRSVVAEMRLASGLLWALPVTLAVSRAEAESIREGEEIALEDPGGRLMAVMRVAERFAYDRGAEAARCYGTTDPAHPGVRRLLRQGEVYLGGEVWLLDRPPAPFAEYRLTPAETRAEFARRGWRTVVGFQTRNPVHRAHEYIQKCALEICDGLLLHPLVGETKDDDLPAAVRMRAYEAILEGYFPRERILLAVFPAAMRYAGPREAVWHALCRKNYGCTHFIVGRDHAGVGSFYGPYDAQRIFDHLDPAELGITPLFFDHTFWCRTCGAMASPKTCPHGPEARVALSGTRVREMLYRGEAPPPEFTRPEVARVLMEGLQAAARPQSVET.

It belongs to the sulfate adenylyltransferase family.

The catalysed reaction is sulfate + ATP + H(+) = adenosine 5'-phosphosulfate + diphosphate. It functions in the pathway sulfur metabolism; hydrogen sulfide biosynthesis; sulfite from sulfate: step 1/3. The sequence is that of Sulfate adenylyltransferase from Symbiobacterium thermophilum (strain DSM 24528 / JCM 14929 / IAM 14863 / T).